We begin with the raw amino-acid sequence, 287 residues long: MKRIFLLIATNMAILLVASIVMSILGVNTSTMGGLLVFAAIFGFGGAFISLAISKWMAKKTMGCEVITTPRDNTERWLVETVARQAEQAGIKMPEVAIYQSPELNAFATGPSKNNALVAVSSGLLYGMSQDEIEAVLAHEVSHVANGDMVTLTLIQGVVNTFVIFAARVVAGIINNFVASNDEEGEGLGMFAYMAVVFVLDMLFGILASIIVAYFSRIREYRADEGAARLAGKEKMIAALDRLRQGPETGAMPASMSALGINGKKSMAELLMSHPPLEKRIAALRAS.

2 helical membrane passes run 4–24 and 33–53; these read IFLL…VMSI and GGLL…SLAI. His-139 contacts Zn(2+). The active site involves Glu-140. Residue His-143 participates in Zn(2+) binding. 2 helical membrane-spanning segments follow: residues 154–174 and 195–215; these read LIQG…AGII and AVVF…VAYF. Glu-220 provides a ligand contact to Zn(2+).

This sequence belongs to the peptidase M48B family. Zn(2+) serves as cofactor.

It is found in the cell inner membrane. This is Protease HtpX from Shewanella halifaxensis (strain HAW-EB4).